A 519-amino-acid chain; its full sequence is (3S,6E)-nerolidol synthase 1 (519 aa).

Residues Asp-273, Asp-277, Asp-417, Ser-421, and Glu-425 each contribute to the Mg(2+) site. Positions 273–277 (DDIFD) match the DDXXD motif motif.

The protein belongs to the terpene synthase family. Tpsg subfamily. The cofactor is Mg(2+). Mn(2+) serves as cofactor. Expressed in receptacle tissue. Not detected in leaves or green fruit.

The protein resides in the cytoplasm. It is found in the cytosol. It carries out the reaction (2E,6E)-farnesyl diphosphate + H2O = (3S,6E)-nerolidol + diphosphate. Its pathway is secondary metabolite biosynthesis; terpenoid biosynthesis. Involved in monoterpene (C10) and sesquiterpene (C15) biosynthesis. Converts geranyl diphosphate (GPP) into S-linalool and farnesyl diphosphate (FPP) into (3S)-E-nerolidol. Exclusively present and highly expressed in the fruit of cultivated (octaploid) varieties. In Fragaria ananassa (Strawberry), this protein is (3S,6E)-nerolidol synthase 1.